A 381-amino-acid chain; its full sequence is Queuine tRNA-ribosyltransferase (381 aa).

D90 serves as the catalytic Proton acceptor. Substrate-binding positions include 90–94, D144, Q193, and G221; that span reads DSGGF. The tract at residues 252 to 258 is RNA binding; sequence GVGTPEN. Residue D271 is the Nucleophile of the active site. The interval 276–280 is RNA binding; important for wobble base 34 recognition; that stretch reads TRNAR. Residues C309, C311, C314, and H340 each contribute to the Zn(2+) site.

This sequence belongs to the queuine tRNA-ribosyltransferase family. As to quaternary structure, homodimer. Within each dimer, one monomer is responsible for RNA recognition and catalysis, while the other monomer binds to the replacement base PreQ1. It depends on Zn(2+) as a cofactor.

The enzyme catalyses 7-aminomethyl-7-carbaguanine + guanosine(34) in tRNA = 7-aminomethyl-7-carbaguanosine(34) in tRNA + guanine. It participates in tRNA modification; tRNA-queuosine biosynthesis. Catalyzes the base-exchange of a guanine (G) residue with the queuine precursor 7-aminomethyl-7-deazaguanine (PreQ1) at position 34 (anticodon wobble position) in tRNAs with GU(N) anticodons (tRNA-Asp, -Asn, -His and -Tyr). Catalysis occurs through a double-displacement mechanism. The nucleophile active site attacks the C1' of nucleotide 34 to detach the guanine base from the RNA, forming a covalent enzyme-RNA intermediate. The proton acceptor active site deprotonates the incoming PreQ1, allowing a nucleophilic attack on the C1' of the ribose to form the product. After dissociation, two additional enzymatic reactions on the tRNA convert PreQ1 to queuine (Q), resulting in the hypermodified nucleoside queuosine (7-(((4,5-cis-dihydroxy-2-cyclopenten-1-yl)amino)methyl)-7-deazaguanosine). The chain is Queuine tRNA-ribosyltransferase from Helicobacter hepaticus (strain ATCC 51449 / 3B1).